The chain runs to 38 residues: Large ribosomal subunit protein bL36 (38 aa).

Belongs to the bacterial ribosomal protein bL36 family.

This Hahella chejuensis (strain KCTC 2396) protein is Large ribosomal subunit protein bL36.